The sequence spans 89 residues: MFIGTIILVLSFLGFVFNRRNIILAFICLETMLLGINLILLRNSVLFDDISGSLFAIVIIILAGVESAIGLSLLVSYYRLRGVINSYGI.

The next 2 membrane-spanning stretches (helical) occupy residues 21 to 41 (NIILAFICLETMLLGINLILL) and 55 to 75 (FAIVIIILAGVESAIGLSLLV).

Belongs to the complex I subunit 4L family. Complex I is composed of 37 different subunits.

The protein localises to the mitochondrion membrane. The enzyme catalyses a ubiquinone + NADH + 5 H(+)(in) = a ubiquinol + NAD(+) + 4 H(+)(out). Its function is as follows. Core subunit of the mitochondrial membrane respiratory chain NADH dehydrogenase (Complex I) that is believed to belong to the minimal assembly required for catalysis. Complex I functions in the transfer of electrons from NADH to the respiratory chain. The immediate electron acceptor for the enzyme is believed to be ubiquinone. The chain is NADH-ubiquinone oxidoreductase chain 4L (ND4L) from Yarrowia lipolytica (strain CLIB 122 / E 150) (Yeast).